The primary structure comprises 126 residues: Holo-[acyl-carrier-protein] synthase (126 aa).

Residues aspartate 9 and glutamate 58 each contribute to the Mg(2+) site.

Belongs to the P-Pant transferase superfamily. AcpS family. Requires Mg(2+) as cofactor.

It localises to the cytoplasm. The enzyme catalyses apo-[ACP] + CoA = holo-[ACP] + adenosine 3',5'-bisphosphate + H(+). Functionally, transfers the 4'-phosphopantetheine moiety from coenzyme A to a Ser of acyl-carrier-protein. The polypeptide is Holo-[acyl-carrier-protein] synthase (Pectobacterium atrosepticum (strain SCRI 1043 / ATCC BAA-672) (Erwinia carotovora subsp. atroseptica)).